The chain runs to 128 residues: Sm-like protein LSM1B (128 aa).

In terms of domain architecture, Sm spans 10 to 85; sequence YLSTSLASYL…VVLIGELDTE (76 aa).

It belongs to the snRNP Sm proteins family. As to quaternary structure, component of the heptameric LSM1-LSM7 complex that forms a seven-membered ring structure with a donut shape. The LSM subunits are arranged in the order LSM1, LSM2, LSM3, LSM6, LSM5, LSM7 and LSM4. LSM1B subunit interacts only with its two neighboring subunits, LSM2 and LSM4. Expressed in roots, leaves, stems, flowers and siliques.

The protein resides in the cytoplasm. It localises to the P-body. Its function is as follows. Component of the cytoplasmic LSM1-LSM7 complex which is involved in mRNA degradation by promoting decapping and leading to accurate 5'-3' mRNA decay. LSM1A and LSM1B are essential for the formation of the cytoplasmic LSM1-LSM7 complex which regulates developmental gene expression by the decapping of specific development-related transcripts. Required for P-body formation during heat stress. The protein is Sm-like protein LSM1B of Arabidopsis thaliana (Mouse-ear cress).